The chain runs to 87 residues: Phosphoribosyl-ATP pyrophosphatase (87 aa).

The protein belongs to the PRA-PH family.

It localises to the cytoplasm. The enzyme catalyses 1-(5-phospho-beta-D-ribosyl)-ATP + H2O = 1-(5-phospho-beta-D-ribosyl)-5'-AMP + diphosphate + H(+). It functions in the pathway amino-acid biosynthesis; L-histidine biosynthesis; L-histidine from 5-phospho-alpha-D-ribose 1-diphosphate: step 2/9. This chain is Phosphoribosyl-ATP pyrophosphatase, found in Pseudarthrobacter chlorophenolicus (strain ATCC 700700 / DSM 12829 / CIP 107037 / JCM 12360 / KCTC 9906 / NCIMB 13794 / A6) (Arthrobacter chlorophenolicus).